The sequence spans 378 residues: Cobalt-precorrin-5B C(1)-methyltransferase (378 aa).

The protein belongs to the CbiD family.

It catalyses the reaction Co-precorrin-5B + S-adenosyl-L-methionine = Co-precorrin-6A + S-adenosyl-L-homocysteine. It functions in the pathway cofactor biosynthesis; adenosylcobalamin biosynthesis; cob(II)yrinate a,c-diamide from sirohydrochlorin (anaerobic route): step 6/10. Catalyzes the methylation of C-1 in cobalt-precorrin-5B to form cobalt-precorrin-6A. This is Cobalt-precorrin-5B C(1)-methyltransferase from Photorhabdus laumondii subsp. laumondii (strain DSM 15139 / CIP 105565 / TT01) (Photorhabdus luminescens subsp. laumondii).